We begin with the raw amino-acid sequence, 601 residues long: Phosphomethylpyrimidine synthase (601 aa).

Disordered stretches follow at residues 1–31 and 100–141; these read MTNK…GKSI and AGRP…RDGQ. Over residues 100–112 the composition is skewed to basic and acidic residues; that stretch reads AGRPVRPEDDGIK. Substrate contacts are provided by residues Asn-208, Met-237, Tyr-266, His-302, 322-324, 363-366, and Glu-402; these read SRG and DGLR. His-406 contributes to the Zn(2+) binding site. Position 429 (Tyr-429) interacts with substrate. His-470 contacts Zn(2+). 3 residues coordinate [4Fe-4S] cluster: Cys-550, Cys-553, and Cys-558.

The protein belongs to the ThiC family. The cofactor is [4Fe-4S] cluster.

It catalyses the reaction 5-amino-1-(5-phospho-beta-D-ribosyl)imidazole + S-adenosyl-L-methionine = 4-amino-2-methyl-5-(phosphooxymethyl)pyrimidine + CO + 5'-deoxyadenosine + formate + L-methionine + 3 H(+). It participates in cofactor biosynthesis; thiamine diphosphate biosynthesis. In terms of biological role, catalyzes the synthesis of the hydroxymethylpyrimidine phosphate (HMP-P) moiety of thiamine from aminoimidazole ribotide (AIR) in a radical S-adenosyl-L-methionine (SAM)-dependent reaction. This chain is Phosphomethylpyrimidine synthase, found in Streptomyces avermitilis (strain ATCC 31267 / DSM 46492 / JCM 5070 / NBRC 14893 / NCIMB 12804 / NRRL 8165 / MA-4680).